Here is a 115-residue protein sequence, read N- to C-terminus: U31-theraphotoxin-Cg1b (115 aa).

The signal sequence occupies residues Met1–Gly18. The propeptide occupies Arg19 to Glu51. Disulfide bonds link Cys52–Cys67, Cys60–Cys73, Cys64–Cys113, and Cys66–Cys86.

It belongs to the neurotoxin 03 (Tx2) family. 02 subfamily. In terms of tissue distribution, expressed by the venom gland.

It is found in the secreted. Its function is as follows. Probable ion channel inhibitor. The protein is U31-theraphotoxin-Cg1b of Chilobrachys guangxiensis (Chinese earth tiger tarantula).